We begin with the raw amino-acid sequence, 564 residues long: Mitochondrial distribution and morphology protein 34-1 (564 aa).

An SMP-LTD domain is found at 1–195; sequence MAFKFNWSPL…LPAIIHRLSL (195 aa). Composition is skewed to polar residues over residues 297–322 and 329–352; these read PDQN…SQTG and DNAS…SSYG. 3 disordered regions span residues 297–408, 414–433, and 452–473; these read PDQN…VTSA, HEQP…DQSL, and DLSS…PFNT. Over residues 359 to 371 the composition is skewed to basic residues; it reads RHSRAHARRRKKR. A compositionally biased stretch (low complexity) spans 383–394; it reads SDSASVSVSDES. The span at 396 to 408 shows a compositional bias: polar residues; sequence YTESASAPSVTSA. Residues 452-466 show a composition bias toward basic and acidic residues; sequence DLSSEIVRDRAEPSE.

Belongs to the MDM34 family. Component of the ER-mitochondria encounter structure (ERMES) or MDM complex, composed of mmm1, mdm10, mdm12 and mdm34.

It is found in the mitochondrion outer membrane. Component of the ERMES/MDM complex, which serves as a molecular tether to connect the endoplasmic reticulum (ER) and mitochondria. Components of this complex are involved in the control of mitochondrial shape and protein biogenesis, and function in nonvesicular lipid trafficking between the ER and mitochondria. Mdm34 is required for the interaction of the ER-resident membrane protein mmm1 and the outer mitochondrial membrane-resident beta-barrel protein mdm10. This is Mitochondrial distribution and morphology protein 34-1 from Penicillium rubens (strain ATCC 28089 / DSM 1075 / NRRL 1951 / Wisconsin 54-1255) (Penicillium chrysogenum).